The sequence spans 435 residues: UPF0761 membrane protein mma_2179 (435 aa).

6 helical membrane-spanning segments follow: residues 45 to 65 (VLAL…FPLF), 103 to 123 (LSAF…LMID), 142 to 162 (ILVY…SMTF), 177 to 197 (VPFV…MVAF), 208 to 228 (LVEW…FEIV), and 252 to 272 (FPIF…GAVV).

Belongs to the UPF0761 family.

It is found in the cell inner membrane. The chain is UPF0761 membrane protein mma_2179 from Janthinobacterium sp. (strain Marseille) (Minibacterium massiliensis).